Reading from the N-terminus, the 474-residue chain is Protein nucleotidyltransferase YdiU (474 aa).

Glycine 89, glycine 91, arginine 92, lysine 112, aspartate 124, glycine 125, arginine 178, and arginine 185 together coordinate ATP. The Proton acceptor role is filled by aspartate 262. Mg(2+)-binding residues include asparagine 263 and aspartate 272. Aspartate 272 serves as a coordination point for ATP.

It belongs to the SELO family. Mg(2+) is required as a cofactor. Requires Mn(2+) as cofactor.

The catalysed reaction is L-seryl-[protein] + ATP = 3-O-(5'-adenylyl)-L-seryl-[protein] + diphosphate. It carries out the reaction L-threonyl-[protein] + ATP = 3-O-(5'-adenylyl)-L-threonyl-[protein] + diphosphate. The enzyme catalyses L-tyrosyl-[protein] + ATP = O-(5'-adenylyl)-L-tyrosyl-[protein] + diphosphate. It catalyses the reaction L-histidyl-[protein] + UTP = N(tele)-(5'-uridylyl)-L-histidyl-[protein] + diphosphate. The catalysed reaction is L-seryl-[protein] + UTP = O-(5'-uridylyl)-L-seryl-[protein] + diphosphate. It carries out the reaction L-tyrosyl-[protein] + UTP = O-(5'-uridylyl)-L-tyrosyl-[protein] + diphosphate. In terms of biological role, nucleotidyltransferase involved in the post-translational modification of proteins. It can catalyze the addition of adenosine monophosphate (AMP) or uridine monophosphate (UMP) to a protein, resulting in modifications known as AMPylation and UMPylation. This Trichodesmium erythraeum (strain IMS101) protein is Protein nucleotidyltransferase YdiU.